We begin with the raw amino-acid sequence, 378 residues long: Protein RecA (378 aa).

A disordered region spans residues 1–20 (MAAKKDKSVPDSKITDKEGK). 80–87 (GAESSGKT) contacts ATP. Residues 344–378 (GPVDKKKKKSKKEASSDDTDDENLEIDDAIDENND) form a disordered region. The span at 359 to 378 (SDDTDDENLEIDDAIDENND) shows a compositional bias: acidic residues.

It belongs to the RecA family.

It localises to the cytoplasm. Can catalyze the hydrolysis of ATP in the presence of single-stranded DNA, the ATP-dependent uptake of single-stranded DNA by duplex DNA, and the ATP-dependent hybridization of homologous single-stranded DNAs. It interacts with LexA causing its activation and leading to its autocatalytic cleavage. This Fusobacterium nucleatum subsp. nucleatum (strain ATCC 25586 / DSM 15643 / BCRC 10681 / CIP 101130 / JCM 8532 / KCTC 2640 / LMG 13131 / VPI 4355) protein is Protein RecA.